A 79-amino-acid polypeptide reads, in one-letter code: Calcium/calmodulin-dependent protein kinase II inhibitor 2 (79 aa).

Residues 1–21 (MSEILPYSEDKMGRFGADPEG) are disordered. Residues 43–69 (KRPPKLGQIGRAKRVVIEDDRIDDVLK) are inhibitory domain.

The protein belongs to the CAMK2N family. In terms of assembly, interacts with CAMK2A and CAMK2B in the presence of Ca(2+)/calmodulin or after autophosphorylation.

It is found in the nucleus. Its subcellular location is the cytoplasm. The protein localises to the cytosol. The protein resides in the synapse. Its function is as follows. Potent and specific cellular inhibitor of CaM-kinase II (CAMK2). Traps Ca(2+)/calmodulin on CAMK2. The polypeptide is Calcium/calmodulin-dependent protein kinase II inhibitor 2 (CAMK2N2) (Bos taurus (Bovine)).